A 95-amino-acid polypeptide reads, in one-letter code: Aspartyl/glutamyl-tRNA(Asn/Gln) amidotransferase subunit C (95 aa).

Belongs to the GatC family. As to quaternary structure, heterotrimer of A, B and C subunits.

It carries out the reaction L-glutamyl-tRNA(Gln) + L-glutamine + ATP + H2O = L-glutaminyl-tRNA(Gln) + L-glutamate + ADP + phosphate + H(+). The enzyme catalyses L-aspartyl-tRNA(Asn) + L-glutamine + ATP + H2O = L-asparaginyl-tRNA(Asn) + L-glutamate + ADP + phosphate + 2 H(+). Functionally, allows the formation of correctly charged Asn-tRNA(Asn) or Gln-tRNA(Gln) through the transamidation of misacylated Asp-tRNA(Asn) or Glu-tRNA(Gln) in organisms which lack either or both of asparaginyl-tRNA or glutaminyl-tRNA synthetases. The reaction takes place in the presence of glutamine and ATP through an activated phospho-Asp-tRNA(Asn) or phospho-Glu-tRNA(Gln). This Rhizobium etli (strain CIAT 652) protein is Aspartyl/glutamyl-tRNA(Asn/Gln) amidotransferase subunit C.